Reading from the N-terminus, the 829-residue chain is Isethionate sulfite-lyase (829 aa).

One can recognise a PFL domain in the interval 31–699 (ERVFNILDSF…VVSATPNGRL (669 aa)). 2-hydroxyethane-1-sulfonate contacts are provided by residues arginine 188, glutamine 192, 467–469 (CTE), and arginine 677. The Cysteine radical intermediate role is filled by cysteine 467. Catalysis depends on glutamate 469, which acts as the Proton acceptor. The region spanning 706-829 (DGSSASHGAD…LIARTQHDAM (124 aa)) is the Glycine radical domain. Glycine 804 carries the glycine radical modification.

This sequence belongs to the glycyl radical enzyme (GRE) family. Homodimer. In terms of processing, requires the activating protein IslB to generate the key active site glycyl radical on Gly-804 that is involved in catalysis.

The catalysed reaction is 2-hydroxyethane-1-sulfonate = acetaldehyde + sulfite + H(+). It participates in organosulfur degradation; alkanesulfonate degradation. In terms of biological role, involved in an anaerobic respiration pathway that converts the sulfonate isethionate (2-hydroxyethanesulfonate) to ammonia, acetate and sulfide. Catalyzes the radical-mediated C-S bond cleavage of isethionate (2-hydroxyethanesulfonate) to form sulfite and acetaldehyde. This is Isethionate sulfite-lyase from Oleidesulfovibrio alaskensis (strain ATCC BAA-1058 / DSM 17464 / G20) (Desulfovibrio alaskensis).